A 49-amino-acid chain; its full sequence is Small ribosomal subunit protein eS31 (49 aa).

Residues Cys-21, Cys-24, Cys-39, and Cys-42 each contribute to the Zn(2+) site. The C4-type zinc-finger motif lies at 21 to 42 (CPRCGNGVFLAEHEDRMSCGRC).

The protein belongs to the eukaryotic ribosomal protein eS31 family. As to quaternary structure, part of the 30S ribosomal subunit. It depends on Zn(2+) as a cofactor.

The protein is Small ribosomal subunit protein eS31 of Methanothrix thermoacetophila (strain DSM 6194 / JCM 14653 / NBRC 101360 / PT) (Methanosaeta thermophila).